We begin with the raw amino-acid sequence, 370 residues long: MVGKLKQNLLLACLVISSVTVFYLGQHAMECHHRIEERSQPVKLESTRTTVRTGLDLKANKTFAYHKDMPLIFIGGVPRSGTTLMRAMLDAHPDIRCGEETRVIPRILALKQMWSRSSKEKIRLDEAGVTDEVLDSAMQAFLLEIIVKHGEPAPYLCNKDPFALKSLTYLSRLFPNAKFLLMVRDGRASVHSMISRKVTIAGFDLNSYRDCLTKWNRAIETMYNQCMEVGYKKCMLVHYEQLVLHPERWMRTLLKFLQIPWNHSVLHHEEMIGKAGGVSLSKVERSTDQVIKPVNVGALSKWVGKIPPDVLQDMAVIAPMLAKLGYDPYANPPNYGKPDPKIIENTRRVYKGEFQLPDFLKEKPQTEQVE.

Over 1 to 8 (MVGKLKQN) the chain is Cytoplasmic. A helical; Signal-anchor for type II membrane protein transmembrane segment spans residues 9 to 25 (LLLACLVISSVTVFYLG). Over 26–370 (QHAMECHHRI…KEKPQTEQVE (345 aa)) the chain is Lumenal. Residue Asn60 is glycosylated (N-linked (GlcNAc...) asparagine). 79–83 (RSGTT) lines the 3'-phosphoadenylyl sulfate pocket. A disulfide bridge connects residues Cys97 and Cys157. Glu100 acts as the Proton donor/acceptor in catalysis. Residues 102-106 (RVIPR) are interaction with peptide substrate. Residues Arg184, Ser192, and Arg196 each coordinate 3'-phosphoadenylyl sulfate. An intrachain disulfide couples Cys226 to Cys234. Residue Tyr239 participates in 3'-phosphoadenylyl sulfate binding. N-linked (GlcNAc...) asparagine glycosylation occurs at Asn262. Residues 286–295 (STDQVIKPVN) and Lys301 each bind 3'-phosphoadenylyl sulfate.

The protein belongs to the protein sulfotransferase family. As to quaternary structure, homodimer. Can also form heterodimers with TPST2. N-glycosylated. As to expression, ubiquitous. Detected in heart, brain, placenta, lung, liver, skeletal muscle, kidney and pancreas.

It localises to the golgi apparatus membrane. The catalysed reaction is L-tyrosyl-[protein] + 3'-phosphoadenylyl sulfate = O-sulfo-L-tyrosine-[protein] + adenosine 3',5'-bisphosphate + H(+). Functionally, catalyzes the O-sulfation of tyrosine residues within acidic motifs of polypeptides, using 3'-phosphoadenylyl sulfate (PAPS) as cosubstrate. The polypeptide is Protein-tyrosine sulfotransferase 1 (TPST1) (Homo sapiens (Human)).